The primary structure comprises 160 residues: Leptin (160 aa).

Residues 1-17 (MDYTLALALSLLQLSMC) form the signal peptide. Residues Cys109 and Cys160 are joined by a disulfide bond.

The protein belongs to the leptin family.

It localises to the secreted. May function as part of a signaling pathway that acts to regulate the size of the body fat depot. The sequence is that of Leptin (lep) from Tetraodon nigroviridis (Spotted green pufferfish).